The sequence spans 85 residues: Coiled-coil-helix-coiled-coil-helix domain-containing protein 7 (85 aa).

The CHCH domain maps to 13–55 (SNPCLEETDASTKCMDDNRYEKDLCTPYFVKYKNCRKFWNGIM). Short sequence motifs (cx9C motif) lie at residues 16 to 26 (CLEETDASTKC) and 37 to 47 (CTPYFVKYKNC). Intrachain disulfides connect Cys-16–Cys-47 and Cys-26–Cys-37.

It belongs to the CHCHD7 family.

It is found in the mitochondrion intermembrane space. The chain is Coiled-coil-helix-coiled-coil-helix domain-containing protein 7 (chchd7) from Xenopus tropicalis (Western clawed frog).